The primary structure comprises 492 residues: Cytochrome P450 2A2 (492 aa).

Cysteine 437 is a heme binding site.

Belongs to the cytochrome P450 family. Heme is required as a cofactor. As to expression, liver specific.

It is found in the endoplasmic reticulum membrane. It localises to the microsome membrane. The enzyme catalyses an organic molecule + reduced [NADPH--hemoprotein reductase] + O2 = an alcohol + oxidized [NADPH--hemoprotein reductase] + H2O + H(+). Highly active in the 15-alpha-hydroxylation of testosterone. This is Cytochrome P450 2A2 (Cyp2a2) from Rattus norvegicus (Rat).